A 686-amino-acid polypeptide reads, in one-letter code: Probable metal-nicotianamine transporter YSL10 (686 aa).

A run of 14 helical transmembrane segments spans residues 36–56 (VTLR…VIVM), 60–80 (LTTG…FFLL), 109–129 (CVVA…IFAM), 151–171 (LGWM…SVVP), 212–232 (MLGK…FYTG), 271–291 (LVNI…WPLI), 316–336 (VFIS…KVMT), 383–403 (IPNW…IATV), 415–435 (VAVS…GCGL), 461–481 (GGII…STAS), 501–521 (FVSQ…VFWL), 556–576 (GSLP…AIAV), 597–617 (MAIP…GSLI), and 639–659 (GLIC…LAGV).

This sequence belongs to the YSL (TC 2.A.67.2) family.

The protein localises to the membrane. Its function is as follows. May be involved in the transport of nicotianamine-chelated metals. In Oryza sativa subsp. japonica (Rice), this protein is Probable metal-nicotianamine transporter YSL10 (YSL10).